A 105-amino-acid polypeptide reads, in one-letter code: Met repressor (105 aa).

This sequence belongs to the MetJ family. In terms of assembly, homodimer.

It is found in the cytoplasm. This regulatory protein, when combined with SAM (S-adenosylmethionine) represses the expression of the methionine regulon and of enzymes involved in SAM synthesis. This chain is Met repressor, found in Yersinia enterocolitica serotype O:8 / biotype 1B (strain NCTC 13174 / 8081).